The sequence spans 373 residues: 3-dehydroquinate synthase (373 aa).

NAD(+) contacts are provided by residues 67–72, 101–105, 125–126, Lys-138, and Lys-147; these read EGEETK, GVILD, and TT. Residues Glu-180, His-240, and His-256 each coordinate Zn(2+).

It belongs to the sugar phosphate cyclases superfamily. Dehydroquinate synthase family. NAD(+) is required as a cofactor. Requires Co(2+) as cofactor. Zn(2+) serves as cofactor.

Its subcellular location is the cytoplasm. It catalyses the reaction 7-phospho-2-dehydro-3-deoxy-D-arabino-heptonate = 3-dehydroquinate + phosphate. Its pathway is metabolic intermediate biosynthesis; chorismate biosynthesis; chorismate from D-erythrose 4-phosphate and phosphoenolpyruvate: step 2/7. Catalyzes the conversion of 3-deoxy-D-arabino-heptulosonate 7-phosphate (DAHP) to dehydroquinate (DHQ). The sequence is that of 3-dehydroquinate synthase from Chlamydia trachomatis serovar L2 (strain ATCC VR-902B / DSM 19102 / 434/Bu).